The primary structure comprises 164 residues: MEMTSTQRLILANQYKLMGLLDPANAQKYARLETIVKGGFSLELKELDNEFLAISEAECQTVLETLEMYHALQVSYENLADKSDLTAHRLQFIGYDAIRERKYLNYLRFITGIEGKYQEFMRCAPGCDSQTPMWDKYNKMLDMWKACPHQYHLSLVEIQNILNA.

The protein belongs to the UPF0304 family.

The polypeptide is UPF0304 protein MS2240 (Mannheimia succiniciproducens (strain KCTC 0769BP / MBEL55E)).